Reading from the N-terminus, the 231-residue chain is Secreted LysM effector LysM13 (231 aa).

The signal sequence occupies residues 1–19 (MVFLSLKYALSGLAATAAA). Asparagine 30, asparagine 34, asparagine 77, asparagine 100, asparagine 130, asparagine 201, and asparagine 226 each carry an N-linked (GlcNAc...) asparagine glycan. A LysM domain is found at 38–82 (TTYTTTSEDTIFTVARKFDRGPCDIARYNRMIDAEHIFANFTLRI).

This sequence belongs to the secreted LysM effector family.

The protein localises to the secreted. In terms of biological role, secreted LysM effector that might have a role in sequestration of chitin oligosaccharides (breakdown products of fungal cell walls that are released during invasion and act as triggers of host immunity) to dampen host defense. The polypeptide is Secreted LysM effector LysM13 (Penicillium expansum (Blue mold rot fungus)).